The primary structure comprises 672 residues: MKQHFPLKDIQQEKRIYRGRIFFAVGLVIICLLVLASRYAYLQIFHYDEFSTASDKNRIRLQPLPPARGYIYDRNGVLLADNYPVFTATLSKADVENVDTVIEQLQPILELTQEDVDRFKSRIKTARKTERVAIKLNLTETNIAKFSEVKYKFPGVRIETQMTRYYPHGDLFAHVIGYVGRINDKELKSIDKDLYAGTNLIGKIGVEKSYEDLLHGTPGYESVEADAHSNILRHLGRKDPTRGNDLYLSLDYGLQVVASQQLAGRRGAIVAIDPRTGEILALVSSPSFNPNLFVTGINHKDYSSLRDNIDQPLYNRAVQGVYPPGSTIKPMEAMGGLHYGIVDWATAISDPGYFHLPGDSHKFRDWKKTGHGIVNMHKAIIMSCDTYFYILANQMGIDQMNQWMRQFGFGQKTGVDLPSESEGLYPNPEWKMRTRKSKWMKGETISVSIGQGAFTATPLQLAMATAITANHGSHVVPHVLRATHGAKPFTVRNAPDGKINFNGTDEDWVKMREAMIDVIQSGTGRGIRTPLYQIAGKTGTAQVKSIAQGKRYNEAALSERQLDHGLFVGFAPADKPEIAIAVIWENGRHGGSAAQLAKPVFDYWLLTRKKNPIRPANHQVNGGLMTAGIKPGELPSGNESASSTPATSAPTSAAASTPQATPTRPATNEVDE.

Residues 21-41 (IFFAVGLVIICLLVLASRYAY) form a helical membrane-spanning segment. Residue Ser326 is the Acyl-ester intermediate of the active site. The Zn(2+) site is built by Asp350, Asp365, His371, and Cys384. The tract at residues 616 to 672 (ANHQVNGGLMTAGIKPGELPSGNESASSTPATSAPTSAAASTPQATPTRPATNEVDE) is disordered. Positions 640-672 (SASSTPATSAPTSAAASTPQATPTRPATNEVDE) are enriched in low complexity.

It belongs to the transpeptidase family. MrdA subfamily. Monomer. It depends on Zn(2+) as a cofactor.

It localises to the cell inner membrane. The enzyme catalyses Preferential cleavage: (Ac)2-L-Lys-D-Ala-|-D-Ala. Also transpeptidation of peptidyl-alanyl moieties that are N-acyl substituents of D-alanine.. Its pathway is cell wall biogenesis; peptidoglycan biosynthesis. Inhibited by the beta-lactams sulbactam and piperacillin-tazobactam. Its function is as follows. Catalyzes cross-linking of the peptidoglycan cell wall. Involved in the determination of the rod shape of the cell. This is Peptidoglycan D,D-transpeptidase MrdA from Acinetobacter baumannii (strain ATCC 19606 / DSM 30007 / JCM 6841 / CCUG 19606 / CIP 70.34 / NBRC 109757 / NCIMB 12457 / NCTC 12156 / 81).